We begin with the raw amino-acid sequence, 59 residues long: Large ribosomal subunit protein uL30 (59 aa).

It belongs to the universal ribosomal protein uL30 family. As to quaternary structure, part of the 50S ribosomal subunit.

This is Large ribosomal subunit protein uL30 from Acetivibrio thermocellus (strain ATCC 27405 / DSM 1237 / JCM 9322 / NBRC 103400 / NCIMB 10682 / NRRL B-4536 / VPI 7372) (Clostridium thermocellum).